Reading from the N-terminus, the 73-residue chain is UPF0346 protein Lreu_0775 (73 aa).

Belongs to the UPF0346 family.

In Limosilactobacillus reuteri (strain DSM 20016) (Lactobacillus reuteri), this protein is UPF0346 protein Lreu_0775.